Here is a 78-residue protein sequence, read N- to C-terminus: Rubredoxin (78 aa).

The Rubredoxin-like domain maps to 23–74 (DARLECKICWWEYDPEVGDPVWQIAPGTSFSALPAHWRCPNCDGEAEQFMVL). Fe cation-binding residues include cysteine 28, cysteine 31, cysteine 61, and cysteine 64.

It belongs to the rubredoxin family. Requires Fe(3+) as cofactor.

Rubredoxin is a small nonheme, iron protein lacking acid-labile sulfide. Its single Fe, chelated to 4 Cys, functions as an electron acceptor and may also stabilize the conformation of the molecule. Could be involved in hydrogenase-linked redox processes. This Cupriavidus necator (strain ATCC 17699 / DSM 428 / KCTC 22496 / NCIMB 10442 / H16 / Stanier 337) (Ralstonia eutropha) protein is Rubredoxin (hoxR).